The primary structure comprises 332 residues: Fructose-bisphosphate aldolase (332 aa).

D-glyceraldehyde 3-phosphate is bound at residue serine 56. Aspartate 93 (proton donor) is an active-site residue. Zn(2+) contacts are provided by histidine 94, aspartate 115, glutamate 147, and histidine 191. Glycine 192 lines the dihydroxyacetone phosphate pocket. A Zn(2+)-binding site is contributed by histidine 234. Dihydroxyacetone phosphate is bound by residues 235-237 and 277-280; these read GAS and NIDS.

Belongs to the class II fructose-bisphosphate aldolase family. Homodimer. The cofactor is Zn(2+).

The enzyme catalyses beta-D-fructose 1,6-bisphosphate = D-glyceraldehyde 3-phosphate + dihydroxyacetone phosphate. The protein operates within carbohydrate degradation; glycolysis; D-glyceraldehyde 3-phosphate and glycerone phosphate from D-glucose: step 4/4. Its function is as follows. Catalyzes the aldol condensation of dihydroxyacetone phosphate (DHAP or glycerone-phosphate) with glyceraldehyde 3-phosphate (G3P) to form fructose 1,6-bisphosphate (FBP) in gluconeogenesis and the reverse reaction in glycolysis. This chain is Fructose-bisphosphate aldolase (fba), found in Treponema pallidum (strain Nichols).